A 313-amino-acid chain; its full sequence is Ribose 1,5-bisphosphate isomerase (313 aa).

Substrate-binding positions include 17–20 (RGAA) and arginine 57. Residue cysteine 121 is the Proton acceptor of the active site. Aspartate 190 acts as the Proton donor in catalysis. Residues 200 to 201 (NK) and lysine 226 each bind substrate.

It belongs to the eIF-2B alpha/beta/delta subunits family. R15P isomerase subfamily.

The enzyme catalyses alpha-D-ribose 1,5-bisphosphate = D-ribulose 1,5-bisphosphate. Its function is as follows. Catalyzes the isomerization of ribose 1,5-bisphosphate (R15P) to ribulose 1,5-bisphosphate (RuBP), the CO(2) acceptor and substrate for RubisCO. Functions in an archaeal AMP degradation pathway, together with AMP phosphorylase and RubisCO. The polypeptide is Ribose 1,5-bisphosphate isomerase (Archaeoglobus fulgidus (strain ATCC 49558 / DSM 4304 / JCM 9628 / NBRC 100126 / VC-16)).